The chain runs to 475 residues: Putative aldehyde dehydrogenase SSP0762 (475 aa).

Gly-201–Gly-207 is a binding site for NAD(+). Residues Glu-245 and Cys-279 contribute to the active site.

This sequence belongs to the aldehyde dehydrogenase family.

The enzyme catalyses an aldehyde + NAD(+) + H2O = a carboxylate + NADH + 2 H(+). The sequence is that of Putative aldehyde dehydrogenase SSP0762 from Staphylococcus saprophyticus subsp. saprophyticus (strain ATCC 15305 / DSM 20229 / NCIMB 8711 / NCTC 7292 / S-41).